The primary structure comprises 408 residues: Imidazolonepropionase (408 aa).

H73 and H75 together coordinate Fe(3+). Residues H73 and H75 each contribute to the Zn(2+) site. Residues R82, Y145, and H178 each contribute to the 4-imidazolone-5-propanoate site. Position 145 (Y145) interacts with N-formimidoyl-L-glutamate. H243 provides a ligand contact to Fe(3+). H243 is a Zn(2+) binding site. Q246 is a binding site for 4-imidazolone-5-propanoate. D318 provides a ligand contact to Fe(3+). D318 provides a ligand contact to Zn(2+). Residues N320 and G322 each coordinate N-formimidoyl-L-glutamate. S323 serves as a coordination point for 4-imidazolone-5-propanoate.

Belongs to the metallo-dependent hydrolases superfamily. HutI family. Zn(2+) is required as a cofactor. Requires Fe(3+) as cofactor.

It is found in the cytoplasm. It catalyses the reaction 4-imidazolone-5-propanoate + H2O = N-formimidoyl-L-glutamate. Its pathway is amino-acid degradation; L-histidine degradation into L-glutamate; N-formimidoyl-L-glutamate from L-histidine: step 3/3. In terms of biological role, catalyzes the hydrolytic cleavage of the carbon-nitrogen bond in imidazolone-5-propanoate to yield N-formimidoyl-L-glutamate. It is the third step in the universal histidine degradation pathway. The protein is Imidazolonepropionase of Shewanella baltica (strain OS195).